Consider the following 597-residue polypeptide: Protein IQ-DOMAIN 29 (597 aa).

The segment at Met-1–Leu-31 is disordered. 3 consecutive IQ domains span residues Leu-106–Arg-134, Val-135–Ser-153, and Gly-157–Asn-183. Residues Val-159–Ser-173 are calmodulin-binding. The short motif at Lys-264–Val-271 is the Nuclear localization signal 1 element. 2 disordered regions span residues Phe-268–Ile-379 and Leu-407–Arg-597. Over residues Ser-289–Thr-300 the composition is skewed to low complexity. The span at Glu-319–Lys-329 shows a compositional bias: basic and acidic residues. The Nuclear localization signal 2 signature appears at His-356 to Asn-363. Basic and acidic residues predominate over residues Lys-414 to Glu-463. Residues Gln-467–Thr-480 are compositionally biased toward polar residues. Positions Lys-481–Asp-500 are enriched in basic and acidic residues. Residues Gly-572 to Lys-584 are compositionally biased toward polar residues. Residues Asp-585–Arg-597 show a composition bias toward basic and acidic residues.

Belongs to the IQD family. As to quaternary structure, binds to multiple calmodulin (CaM) in the presence of Ca(2+) and CaM-like proteins.

It localises to the nucleus. The protein resides in the nucleus envelope. Its subcellular location is the cytoplasm. It is found in the cytoskeleton. The protein localises to the cell membrane. In terms of biological role, may be involved in cooperative interactions with calmodulins or calmodulin-like proteins. Recruits calmodulin proteins to microtubules, thus being a potential scaffold in cellular signaling and trafficking. May associate with nucleic acids and regulate gene expression at the transcriptional or post-transcriptional level. This Arabidopsis thaliana (Mouse-ear cress) protein is Protein IQ-DOMAIN 29.